We begin with the raw amino-acid sequence, 52 residues long: Protein YabQ (52 aa).

Its function is as follows. Identified as a multicopy suppressor of the slow growth phenotype of an rsgA (yjeQ) deletion mutant. This chain is Protein YabQ (yabQ), found in Escherichia coli (strain K12).